Consider the following 421-residue polypeptide: Testin (421 aa).

The region spanning 92 to 199 (MILTNPVAAK…GDVKLPCEMD (108 aa)) is the PET domain. LIM zinc-binding domains follow at residues 234–297 (YSCY…CDSE), 299–359 (PRCA…NHAV), and 362–421 (QGCH…KRMS).

This sequence belongs to the prickle / espinas / testin family. Interacts via LIM domain 1 with ZYX. Interacts (via LIM domain 3) with ENAH and VASP. Interacts with ALKBH4, talin, actin, alpha-actinin, GRIP1 and PXN. Interacts (via LIM domain 2) with ACTL7A (via N-terminus). Heterodimer with ACTL7A; the heterodimer interacts with ENAH to form a heterotrimer.

The protein resides in the cytoplasm. It is found in the cell junction. Its subcellular location is the focal adhesion. In terms of biological role, scaffold protein that may play a role in cell adhesion, cell spreading and in the reorganization of the actin cytoskeleton. Plays a role in the regulation of cell proliferation. May act as a tumor suppressor. This is Testin (TES) from Nomascus leucogenys (Northern white-cheeked gibbon).